The primary structure comprises 146 residues: Large ribosomal subunit protein uL15 (146 aa).

The segment at 1–46 is disordered; it reads MLHQIKPFKGARKTVKRLGRGCGSGTGKTSGKGHKGQLARSGGGVR. A compositionally biased stretch (basic residues) spans 9 to 19; the sequence is KGARKTVKRLG. Positions 20 to 30 are enriched in gly residues; it reads RGCGSGTGKTS.

The protein belongs to the universal ribosomal protein uL15 family. As to quaternary structure, part of the 50S ribosomal subunit.

Functionally, binds to the 23S rRNA. This chain is Large ribosomal subunit protein uL15, found in Phytoplasma mali (strain AT).